Consider the following 447-residue polypeptide: Adenylosuccinate synthetase (447 aa).

Residues 12–18 (GDEGKGK) and 40–42 (GHT) contribute to the GTP site. Asp-13 (proton acceptor) is an active-site residue. Asp-13 and Gly-40 together coordinate Mg(2+). IMP contacts are provided by residues 13 to 16 (DEGK), 38 to 41 (NAGH), Thr-128, Arg-142, Gln-223, Thr-238, and Arg-302. His-41 functions as the Proton donor in the catalytic mechanism. 298 to 304 (TTTGRRR) lines the substrate pocket. GTP is bound by residues Arg-304, 330 to 332 (KLD), and 412 to 414 (SLG).

The protein belongs to the adenylosuccinate synthetase family. Homodimer. It depends on Mg(2+) as a cofactor.

It is found in the cytoplasm. It catalyses the reaction IMP + L-aspartate + GTP = N(6)-(1,2-dicarboxyethyl)-AMP + GDP + phosphate + 2 H(+). Its pathway is purine metabolism; AMP biosynthesis via de novo pathway; AMP from IMP: step 1/2. Functionally, plays an important role in the de novo pathway of purine nucleotide biosynthesis. Catalyzes the first committed step in the biosynthesis of AMP from IMP. The protein is Adenylosuccinate synthetase of Thermosynechococcus vestitus (strain NIES-2133 / IAM M-273 / BP-1).